The following is a 155-amino-acid chain: Endoribonuclease YbeY (155 aa).

3 residues coordinate Zn(2+): His-119, His-123, and His-129.

This sequence belongs to the endoribonuclease YbeY family. Zn(2+) serves as cofactor.

The protein localises to the cytoplasm. Its function is as follows. Single strand-specific metallo-endoribonuclease involved in late-stage 70S ribosome quality control and in maturation of the 3' terminus of the 16S rRNA. The protein is Endoribonuclease YbeY of Mycoplasmopsis synoviae (strain 53) (Mycoplasma synoviae).